The chain runs to 410 residues: Peptidase T (410 aa).

Histidine 79 contacts Zn(2+). Aspartate 81 is an active-site residue. Aspartate 142 provides a ligand contact to Zn(2+). The active-site Proton acceptor is the glutamate 176. Positions 177, 199, and 381 each coordinate Zn(2+).

Belongs to the peptidase M20B family. Zn(2+) serves as cofactor.

It is found in the cytoplasm. The enzyme catalyses Release of the N-terminal residue from a tripeptide.. Cleaves the N-terminal amino acid of tripeptides. The polypeptide is Peptidase T (Bacillus pumilus (strain SAFR-032)).